The primary structure comprises 490 residues: Tektin-3 (490 aa).

Threonine 7, threonine 9, and threonine 11 each carry an O-linked (GalNAc...) threonine glycan. N-linked (GlcNAc...) asparagine glycosylation is found at asparagine 41, asparagine 86, asparagine 111, and asparagine 276. The stretch at 415 to 461 forms a coiled coil; that stretch reads MAQLRLVNEVYEVDETIQTLQQRLRDSEDTLQSLAHTKATLEHDLAV.

It belongs to the tektin family. In terms of assembly, microtubule inner protein component of sperm flagellar doublet microtubules. Interacts with TEKT1, TEKT2, TEKT4 and TEKT5. Interacts with CCDC38. N- and O-glycosylated. Post-translationally, ubiquitinated, leading to its degradation. Deubiquitinated by USP16, promoting its stability. In terms of processing, may be proteolytically processed during the epididymal transit of spermatozoa. Expressed preferentially in testis. Expressed predominantly in late pachytene spermatocytes and early round spermatids. Expressed in spermatozoa.

The protein resides in the cytoplasm. Its subcellular location is the cytoskeleton. It is found in the cilium axoneme. The protein localises to the flagellum axoneme. It localises to the cytoplasmic vesicle. The protein resides in the secretory vesicle. Its subcellular location is the acrosome outer membrane. Its function is as follows. Microtubule inner protein (MIP) part of the dynein-decorated doublet microtubules (DMTs) in cilia and flagellar axoneme. Forms filamentous polymers in the walls of ciliary and flagellar microtubules. Required for normal sperm mobility. This is Tektin-3 (Tekt3) from Mus musculus (Mouse).